The primary structure comprises 136 residues: Gene 46 protein (136 aa).

In Mycobacterium (Mycobacteriophage D29), this protein is Gene 46 protein (46).